The following is a 132-amino-acid chain: Small ribosomal subunit protein uS8 (132 aa).

This sequence belongs to the universal ribosomal protein uS8 family. Part of the 30S ribosomal subunit. Contacts proteins S5 and S12.

In terms of biological role, one of the primary rRNA binding proteins, it binds directly to 16S rRNA central domain where it helps coordinate assembly of the platform of the 30S subunit. In Rhodococcus erythropolis (strain PR4 / NBRC 100887), this protein is Small ribosomal subunit protein uS8.